A 457-amino-acid chain; its full sequence is Phosphomethylpyrimidine synthase (457 aa).

Residues Asn-80, Met-109, Tyr-139, His-175, 195-197, 236-239, and Glu-275 each bind substrate; these read SRG and DSLR. Residue His-279 participates in Zn(2+) binding. Tyr-302 contacts substrate. A Zn(2+)-binding site is contributed by His-343. Positions 423, 426, and 431 each coordinate [4Fe-4S] cluster.

Belongs to the ThiC family. [4Fe-4S] cluster serves as cofactor.

The enzyme catalyses 5-amino-1-(5-phospho-beta-D-ribosyl)imidazole + S-adenosyl-L-methionine = 4-amino-2-methyl-5-(phosphooxymethyl)pyrimidine + CO + 5'-deoxyadenosine + formate + L-methionine + 3 H(+). It participates in cofactor biosynthesis; thiamine diphosphate biosynthesis. Functionally, catalyzes the synthesis of the hydroxymethylpyrimidine phosphate (HMP-P) moiety of thiamine from aminoimidazole ribotide (AIR) in a radical S-adenosyl-L-methionine (SAM)-dependent reaction. The chain is Phosphomethylpyrimidine synthase from Trichormus variabilis (strain ATCC 29413 / PCC 7937) (Anabaena variabilis).